The sequence spans 280 residues: Phosphatidylinositol N-acetylglucosaminyltransferase GPI2 subunit (280 aa).

Residues 1–53 (MTRSPWKRLLWLKQEYPDNYTDPSFIELRARQKAESNQKSDRKLSEAARAQIR) lie on the Cytoplasmic side of the membrane. Residues 54–74 (LDFISFYQTILNTSFIYITFT) traverse the membrane as a helical segment. A topological domain (extracellular) is located at residue Tyr75. Residues 76–96 (IYYYGFDPIPPTIFLSFITLI) form a helical membrane-spanning segment. At 97 to 108 (ISRTKVDPLLSS) the chain is on the cytoplasmic side. A helical membrane pass occupies residues 109–129 (FMDVKSSLIITFAMLTLSPVL). The Extracellular segment spans residues 130 to 135 (KSLSKT). A helical transmembrane segment spans residues 136–156 (TASDSIWTLSFWLTLWYIFVI). The Cytoplasmic portion of the chain corresponds to 157-189 (SSTKSKDKPSNLSTNILVALVAVLSSRLSTTID). Residues 190–210 (VFCFLLICIQLNIILPTYLSV) traverse the membrane as a helical segment. The Extracellular portion of the chain corresponds to 211-220 (TNKVVPIISN). The chain crosses the membrane as a helical span at residues 221 to 241 (IIVYSFLNVALGWIYMLLIFF). Residues 242–280 (ASVFYITVLPKWFIYWKINYHKRDNDLLSTWDARTPILD) lie on the Cytoplasmic side of the membrane.

Belongs to the PIGC family. In terms of assembly, component of the phosphatidylinositol N-acetylglucosaminyltransferase (GPI-GlcNAc transferase) complex composed of at least GPI1, GPI2, GPI3, GPI15, GPI19 and ERI1. Interacts with ERI1.

The protein resides in the membrane. The catalysed reaction is a 1,2-diacyl-sn-glycero-3-phospho-(1D-myo-inositol) + UDP-N-acetyl-alpha-D-glucosamine = a 6-(N-acetyl-alpha-D-glucosaminyl)-1-(1,2-diacyl-sn-glycero-3-phospho)-1D-myo-inositol + UDP + H(+). Its pathway is glycolipid biosynthesis; glycosylphosphatidylinositol-anchor biosynthesis. Functionally, part of the complex catalyzing the transfer of N-acetylglucosamine from UDP-N-acetylglucosamine to phosphatidylinositol, the first step of GPI biosynthesis. The sequence is that of Phosphatidylinositol N-acetylglucosaminyltransferase GPI2 subunit (GPI2) from Saccharomyces cerevisiae (strain ATCC 204508 / S288c) (Baker's yeast).